The sequence spans 374 residues: MQTSFDHLADRILAGGDATPADALAVLRADEKDLLHVVAAAGRLRRARFGNTVKVNYLVNLKSGLCPEDCHYCSQALGSRAPILKYNWLSSEEVLEQAGAGLRGGATRVCLVSSGRGPSDRDVDRVAAMAQELKGEQPGVEICACLGLLKDGQAERLRAAGVDAYNHNINTAESHHDTIVSTHSYSDRVDTIEKAAAAGLSPCSGLIAGLGETDEQLVEALFALKALGADSIPVNFLMPFDGTPSERTFELTPIRCVQILAMTRFVCPDTEIRIAGGREMHLRSLQALALHVANSIFLGDYLTSEGQDARADLEMLRDNGFAILGAEAKPAGTATAAHRAQTAHDIAGGTSVAGSAPDPAIRRRGAGTDVPANA.

The 228-residue stretch at 51 to 278 folds into the Radical SAM core domain; the sequence is NTVKVNYLVN…DTEIRIAGGR (228 aa). [4Fe-4S] cluster-binding residues include Cys66, Cys70, and Cys73. The [2Fe-2S] cluster site is built by Cys110, Cys143, Cys203, and Arg273. The interval 346–374 is disordered; it reads IAGGTSVAGSAPDPAIRRRGAGTDVPANA.

Belongs to the radical SAM superfamily. Biotin synthase family. Homodimer. It depends on [4Fe-4S] cluster as a cofactor. [2Fe-2S] cluster is required as a cofactor.

It catalyses the reaction (4R,5S)-dethiobiotin + (sulfur carrier)-SH + 2 reduced [2Fe-2S]-[ferredoxin] + 2 S-adenosyl-L-methionine = (sulfur carrier)-H + biotin + 2 5'-deoxyadenosine + 2 L-methionine + 2 oxidized [2Fe-2S]-[ferredoxin]. It functions in the pathway cofactor biosynthesis; biotin biosynthesis; biotin from 7,8-diaminononanoate: step 2/2. Its function is as follows. Catalyzes the conversion of dethiobiotin (DTB) to biotin by the insertion of a sulfur atom into dethiobiotin via a radical-based mechanism. The polypeptide is Biotin synthase (Nocardioides sp. (strain ATCC BAA-499 / JS614)).